The primary structure comprises 54 residues: Ferredoxin (54 aa).

4Fe-4S ferredoxin-type domains are found at residues 2–25 (YVIN…IQQG) and 26–54 (SIYA…NPED). [4Fe-4S] cluster contacts are provided by cysteine 8, cysteine 11, cysteine 14, cysteine 18, cysteine 35, cysteine 38, cysteine 41, and cysteine 45.

The cofactor is [4Fe-4S] cluster.

In terms of biological role, ferredoxins are iron-sulfur proteins that transfer electrons in a wide variety of metabolic reactions. This chain is Ferredoxin, found in Peptoniphilus asaccharolyticus (Peptostreptococcus asaccharolyticus).